The following is a 175-amino-acid chain: Bifunctional protein PyrR (175 aa).

A PRPP-binding motif is present at residues valine 98–threonine 110.

This sequence belongs to the purine/pyrimidine phosphoribosyltransferase family. PyrR subfamily. As to quaternary structure, homodimer and homohexamer; in equilibrium.

The enzyme catalyses UMP + diphosphate = 5-phospho-alpha-D-ribose 1-diphosphate + uracil. In terms of biological role, regulates transcriptional attenuation of the pyrimidine nucleotide (pyr) operon by binding in a uridine-dependent manner to specific sites on pyr mRNA. This disrupts an antiterminator hairpin in the RNA and favors formation of a downstream transcription terminator, leading to a reduced expression of downstream genes. Its function is as follows. Also displays a weak uracil phosphoribosyltransferase activity which is not physiologically significant. In Staphylococcus aureus (strain bovine RF122 / ET3-1), this protein is Bifunctional protein PyrR.